The following is a 537-amino-acid chain: Tyrosine-protein phosphatase CDC14 homolog (537 aa).

One can recognise a Tyrosine-protein phosphatase domain in the interval 182-345 (DFNWISPKFI…QVHFRAYFYE (164 aa)). Catalysis depends on C286, which acts as the Phosphocysteine intermediate. The disordered stretch occupies residues 359–537 (EPLATPPRHP…PKPSKSRLIS (179 aa)). The segment covering 370–382 (NATNGTSQSNIST) has biased composition (polar residues). Low complexity predominate over residues 400-411 (PPSARRLPSASS). Over residues 421–437 (ASKQSIQNENKASYSSY) the composition is skewed to polar residues. T453 bears the Phosphothreonine mark. 2 positions are modified to phosphoserine: S468 and S470. Residues 490 to 502 (RRTSGNRWSSGSS) show a composition bias toward low complexity. S513 carries the post-translational modification Phosphoserine. The segment covering 514–523 (MSSLNNTSNG) has biased composition (polar residues). The span at 526–537 (AKPKPSKSRLIS) shows a compositional bias: basic residues.

The protein belongs to the protein-tyrosine phosphatase family. Non-receptor class CDC14 subfamily. Interacts with ark1 at the kinetochores. Interacts with bir1, cdc25, mid1, nbl1, pic1, and rad24. In terms of processing, phosphorylated by cds1, chk1, pmk1, and cdc2 upon Hydroxylurea and H(2)O(2) stress treatment. Phosphorylation regulates the nucleolar-to-nucleoplasmic transition. Is able to autodephosphorylate.

Its subcellular location is the nucleus. The protein resides in the nucleolus. The protein localises to the cytoplasm. It localises to the cytoskeleton. It is found in the microtubule organizing center. Its subcellular location is the spindle pole body. It catalyses the reaction O-phospho-L-tyrosyl-[protein] + H2O = L-tyrosyl-[protein] + phosphate. Protein phosphatase which antagonizes mitotic cyclin-dependent kinase cdc2, the inactivation of which is essential for exit from mitosis. To access its substrates, is released from nucleolar sequestration during mitosis. Plays an essential in coordinating the nuclear division cycle with cytokinesis through the cytokinesis checkpoint. Involved in chromosome segregation, where it is required for meiosis I spindle dissambly as well as for establishing two consecutive chromosome segregation phases. Allows damaged actomyosin rings to be maintained to facilitate completion of cell division in response to minor perturbation of the cell division machinery. Dephosphorylates the mitotic inducer cdc25 for its rapid degradation. Down-regulation of cdc25 activity ensures a prompt inactivation of mitotic cdc2 complexes to trigger cell division. Also dephosphorylates cdc2-phosphorylated nsk1, allowing nsk1-binding to kinetochores and spindle. Dephosphorylates ase1, which is essential for spindle midzone assembly and for continuous extension of the anaphase spindle. Tethered to the contractile ring by mid1, where it dephosphorylates cdc15. The polypeptide is Tyrosine-protein phosphatase CDC14 homolog (clp1) (Schizosaccharomyces pombe (strain 972 / ATCC 24843) (Fission yeast)).